The chain runs to 98 residues: Integration host factor subunit alpha (98 aa).

The segment at 50-71 (GNFDLRDKNQRPGRNPKTGEDI) is disordered.

It belongs to the bacterial histone-like protein family. In terms of assembly, heterodimer of an alpha and a beta chain.

This protein is one of the two subunits of integration host factor, a specific DNA-binding protein that functions in genetic recombination as well as in transcriptional and translational control. The protein is Integration host factor subunit alpha of Proteus mirabilis (strain HI4320).